A 423-amino-acid chain; its full sequence is MAQFIDRRLNGKNKSAVNRQRFMRRYKEQIKESVADAVNRRSITNTETGEDVAIPHKDIKEPLFHQGKGGLRERVHPGNDQFITGDKIERPKGGQGGGGAGDGDASADGEGQDDFVFQISKDEYLDLLFEDLALPNLKKNQVNKITEWKKHRAGYQTAGMPSNISIVRSLQQSLARRTAMSAGKKRLLHELELELERIQNQEPAQKLEEMKLKQEIAELRKAIESVPFIDTFDLRFKNYERKPVPSSQAVMFCLMDVSGSMDQATKDIAKRFYVLLYLFLNRTYENVEVVFIRHHTQAKEVDEHEFFYSQETGGTIVSSALKLMDEIVKARYPVGEWNIYAAQASDGDNWADDSPRCKELLTNKLLPNCQYYAYIEITRRSHQTLWHEYEKLEESFDNFAMKNIRSVEDIFPVFRELFHKETA.

Residues 81-111 (QFITGDKIERPKGGQGGGGAGDGDASADGEG) are disordered. Over residues 93–102 (GGQGGGGAGD) the composition is skewed to gly residues.

This sequence belongs to the UPF0229 family.

This Vibrio vulnificus (strain YJ016) protein is UPF0229 protein VV2350.